A 229-amino-acid chain; its full sequence is Orotidine 5'-phosphate decarboxylase (229 aa).

Substrate is bound by residues Asp9, Lys31, 58–67, Thr121, Arg179, Gln188, Gly208, and Arg209; that span reads DLKLFDIPNT. The active-site Proton donor is Lys60.

This sequence belongs to the OMP decarboxylase family. Type 1 subfamily. In terms of assembly, homodimer.

It catalyses the reaction orotidine 5'-phosphate + H(+) = UMP + CO2. It functions in the pathway pyrimidine metabolism; UMP biosynthesis via de novo pathway; UMP from orotate: step 2/2. Functionally, catalyzes the decarboxylation of orotidine 5'-monophosphate (OMP) to uridine 5'-monophosphate (UMP). This chain is Orotidine 5'-phosphate decarboxylase, found in Lawsonia intracellularis (strain PHE/MN1-00).